The following is a 201-amino-acid chain: Recombination protein RecR (201 aa).

The segment at 57–72 (CQQCRNFTEEALCEIC) adopts a C4-type zinc-finger fold. The Toprim domain maps to 81 to 176 (TTLCIVETPG…NISRIAHGVP (96 aa)).

The protein belongs to the RecR family.

May play a role in DNA repair. It seems to be involved in an RecBC-independent recombinational process of DNA repair. It may act with RecF and RecO. In Colwellia psychrerythraea (strain 34H / ATCC BAA-681) (Vibrio psychroerythus), this protein is Recombination protein RecR.